Consider the following 988-residue polypeptide: DNA polymerase (988 aa).

The protein belongs to the DNA polymerase type-B family. As to quaternary structure, interacts with A20. Component of the Uracil-DNA glycosylase(UDG)-A20-polymerase complex; A20 and UDG form a heterodimeric processivity factor that associates with E9 to form the processive polymerase holoenzyme.

The enzyme catalyses DNA(n) + a 2'-deoxyribonucleoside 5'-triphosphate = DNA(n+1) + diphosphate. Functionally, catalyzes DNA synthesis. Acquires processivity by associating with a heterodimeric processivity factor comprised of the viral A20 and D4 proteins, thereby forming the DNA polymerase holoenzyme. Displays 3'- to 5' exonuclease activity. Might participate in viral DNA recombination. Does not perform translesion synthesis across an abasic site. This chain is DNA polymerase (POL), found in Vertebrata (FPV).